A 245-amino-acid chain; its full sequence is 8-amino-3,8-dideoxy-manno-octulosonate cytidylyltransferase (245 aa).

The protein belongs to the KdsB family.

It is found in the cytoplasm. It carries out the reaction 8-amino-3,8-dideoxy-alpha-D-manno-octulosonate + CTP = CMP-8-amino-3,8-dideoxy-alpha-D-manno-oct-2-ulosonate + diphosphate. Its pathway is bacterial outer membrane biogenesis; lipopolysaccharide biosynthesis. Activates KDO8N (a required 8-carbon sugar) for incorporation into bacterial lipopolysaccharide in the Shewanella genus. This chain is 8-amino-3,8-dideoxy-manno-octulosonate cytidylyltransferase, found in Shewanella piezotolerans (strain WP3 / JCM 13877).